Here is a 367-residue protein sequence, read N- to C-terminus: Cytochrome b (367 aa).

4 helical membrane passes run phenylalanine 33–methionine 53, tryptophan 77–isoleucine 98, tryptophan 113–leucine 133, and phenylalanine 178–leucine 198. Heme b contacts are provided by histidine 83 and histidine 97. Heme b is bound by residues histidine 182 and histidine 196. Position 201 (histidine 201) interacts with a ubiquinone. Helical transmembrane passes span isoleucine 226 to serine 246, leucine 288 to histidine 308, phenylalanine 320 to glycine 340, and tyrosine 347 to proline 367.

Belongs to the cytochrome b family. In terms of assembly, the cytochrome bc1 complex contains 11 subunits: 3 respiratory subunits (MT-CYB, CYC1 and UQCRFS1), 2 core proteins (UQCRC1 and UQCRC2) and 6 low-molecular weight proteins (UQCRH/QCR6, UQCRB/QCR7, UQCRQ/QCR8, UQCR10/QCR9, UQCR11/QCR10 and a cleavage product of UQCRFS1). This cytochrome bc1 complex then forms a dimer. The cofactor is heme b.

Its subcellular location is the mitochondrion inner membrane. In terms of biological role, component of the ubiquinol-cytochrome c reductase complex (complex III or cytochrome b-c1 complex) that is part of the mitochondrial respiratory chain. The b-c1 complex mediates electron transfer from ubiquinol to cytochrome c. Contributes to the generation of a proton gradient across the mitochondrial membrane that is then used for ATP synthesis. The sequence is that of Cytochrome b (MT-CYB) from Hypsugo savii (Savi's pipistrelle).